The chain runs to 158 residues: NAD(P)H-quinone oxidoreductase subunit J, chloroplastic (158 aa).

Belongs to the complex I 30 kDa subunit family. As to quaternary structure, NDH is composed of at least 16 different subunits, 5 of which are encoded in the nucleus.

It is found in the plastid. Its subcellular location is the chloroplast thylakoid membrane. It catalyses the reaction a plastoquinone + NADH + (n+1) H(+)(in) = a plastoquinol + NAD(+) + n H(+)(out). It carries out the reaction a plastoquinone + NADPH + (n+1) H(+)(in) = a plastoquinol + NADP(+) + n H(+)(out). Its function is as follows. NDH shuttles electrons from NAD(P)H:plastoquinone, via FMN and iron-sulfur (Fe-S) centers, to quinones in the photosynthetic chain and possibly in a chloroplast respiratory chain. The immediate electron acceptor for the enzyme in this species is believed to be plastoquinone. Couples the redox reaction to proton translocation, and thus conserves the redox energy in a proton gradient. The polypeptide is NAD(P)H-quinone oxidoreductase subunit J, chloroplastic (Coffea arabica (Arabian coffee)).